A 572-amino-acid chain; its full sequence is Urease subunit alpha (572 aa).

In terms of domain architecture, Urease spans 136 to 572 (GGIDTHIHWI…VPLAQRYFLF (437 aa)). Ni(2+)-binding residues include H141, H143, and K224. K224 is modified (N6-carboxylysine). H226 serves as a coordination point for substrate. Ni(2+) is bound by residues H253 and H279. The active-site Proton donor is H327. Residue D367 coordinates Ni(2+).

This sequence belongs to the metallo-dependent hydrolases superfamily. Urease alpha subunit family. In terms of assembly, heterotrimer of UreA (gamma), UreB (beta) and UreC (alpha) subunits. Three heterotrimers associate to form the active enzyme. Requires Ni cation as cofactor. In terms of processing, carboxylation allows a single lysine to coordinate two nickel ions.

The protein localises to the cytoplasm. The catalysed reaction is urea + 2 H2O + H(+) = hydrogencarbonate + 2 NH4(+). Its pathway is nitrogen metabolism; urea degradation; CO(2) and NH(3) from urea (urease route): step 1/1. This Actinobacillus pleuropneumoniae serotype 3 (strain JL03) protein is Urease subunit alpha.